The sequence spans 375 residues: Queuine tRNA-ribosyltransferase (375 aa).

The active-site Proton acceptor is aspartate 89. Residues 89–93 (DSGGF), aspartate 143, glutamine 187, and glycine 214 contribute to the substrate site. The interval 245 to 251 (GVGKPED) is RNA binding. Residue aspartate 264 is the Nucleophile of the active site. Positions 269–273 (TRNAR) are RNA binding; important for wobble base 34 recognition. Positions 302, 304, 307, and 333 each coordinate Zn(2+).

Belongs to the queuine tRNA-ribosyltransferase family. In terms of assembly, homodimer. Within each dimer, one monomer is responsible for RNA recognition and catalysis, while the other monomer binds to the replacement base PreQ1. Requires Zn(2+) as cofactor.

The enzyme catalyses 7-aminomethyl-7-carbaguanine + guanosine(34) in tRNA = 7-aminomethyl-7-carbaguanosine(34) in tRNA + guanine. It participates in tRNA modification; tRNA-queuosine biosynthesis. Functionally, catalyzes the base-exchange of a guanine (G) residue with the queuine precursor 7-aminomethyl-7-deazaguanine (PreQ1) at position 34 (anticodon wobble position) in tRNAs with GU(N) anticodons (tRNA-Asp, -Asn, -His and -Tyr). Catalysis occurs through a double-displacement mechanism. The nucleophile active site attacks the C1' of nucleotide 34 to detach the guanine base from the RNA, forming a covalent enzyme-RNA intermediate. The proton acceptor active site deprotonates the incoming PreQ1, allowing a nucleophilic attack on the C1' of the ribose to form the product. After dissociation, two additional enzymatic reactions on the tRNA convert PreQ1 to queuine (Q), resulting in the hypermodified nucleoside queuosine (7-(((4,5-cis-dihydroxy-2-cyclopenten-1-yl)amino)methyl)-7-deazaguanosine). The polypeptide is Queuine tRNA-ribosyltransferase (Salmonella paratyphi A (strain ATCC 9150 / SARB42)).